The chain runs to 425 residues: 3-phosphoshikimate 1-carboxyvinyltransferase (425 aa).

3 residues coordinate 3-phosphoshikimate: Lys21, Ser22, and Arg26. Lys21 serves as a coordination point for phosphoenolpyruvate. Phosphoenolpyruvate contacts are provided by Gly91 and Arg119. The 3-phosphoshikimate site is built by Ser164, Gln166, Asp311, and Lys338. Position 166 (Gln166) interacts with phosphoenolpyruvate. Asp311 acts as the Proton acceptor in catalysis. Residues Arg342 and Arg383 each contribute to the phosphoenolpyruvate site.

It belongs to the EPSP synthase family. Monomer.

Its subcellular location is the cytoplasm. It carries out the reaction 3-phosphoshikimate + phosphoenolpyruvate = 5-O-(1-carboxyvinyl)-3-phosphoshikimate + phosphate. It participates in metabolic intermediate biosynthesis; chorismate biosynthesis; chorismate from D-erythrose 4-phosphate and phosphoenolpyruvate: step 6/7. Catalyzes the transfer of the enolpyruvyl moiety of phosphoenolpyruvate (PEP) to the 5-hydroxyl of shikimate-3-phosphate (S3P) to produce enolpyruvyl shikimate-3-phosphate and inorganic phosphate. In Campylobacter fetus subsp. fetus (strain 82-40), this protein is 3-phosphoshikimate 1-carboxyvinyltransferase.